The primary structure comprises 65 residues: Large ribosomal subunit protein bL31 (65 aa).

4 residues coordinate Zn(2+): C16, C18, C36, and C39.

The protein belongs to the bacterial ribosomal protein bL31 family. Type A subfamily. Part of the 50S ribosomal subunit. The cofactor is Zn(2+).

Binds the 23S rRNA. The protein is Large ribosomal subunit protein bL31 of Geotalea uraniireducens (strain Rf4) (Geobacter uraniireducens).